A 273-amino-acid chain; its full sequence is SPRY domain-containing SOCS box protein 1 (273 aa).

Tyrosine 31 carries the post-translational modification Phosphotyrosine. The region spanning 33-231 is the B30.2/SPRY domain; sequence KPTRLDLLLD…IRMRYLNGLD (199 aa). One can recognise an SOCS box domain in the interval 232 to 273; that stretch reads PEPLPLMDLCRRSVRLALGKGRLGEIHALPLPASLKAYLLYQ.

It belongs to the SPSB family. As to quaternary structure, component of the probable ECS(SPSB1) E3 ubiquitin-protein ligase complex which contains CUL5, RNF7/RBX2, Elongin BC complex and SPSB1. Interacts with CUL5, RNF7, ELOB and ELOC. Directly interacts with MET tyrosine kinase domain in the presence and in the absence of HGF, however HGF treatment has a positive effect on this interaction. When phosphorylated, interacts with RASA1 without affecting its stability. Interacts (via B30.2/SPRY domain) with PAWR; this interaction is direct and occurs in association with the Elongin BC complex. Interacts with NOS2 and EPHB2.

The protein localises to the cytoplasm. Its subcellular location is the cytosol. The protein operates within protein modification; protein ubiquitination. Its function is as follows. Substrate recognition component of a SCF-like ECS (Elongin BC-CUL2/5-SOCS-box protein) E3 ubiquitin-protein ligase complex which mediates the ubiquitination and subsequent proteasomal degradation of target proteins. Negatively regulates nitric oxide (NO) production and limits cellular toxicity in activated macrophages by mediating the ubiquitination and proteasomal degradation of NOS2. Acts as a bridge which links NOS2 with the ECS E3 ubiquitin ligase complex components ELOC and CUL5. The protein is SPRY domain-containing SOCS box protein 1 (SPSB1) of Bos taurus (Bovine).